The chain runs to 589 residues: ATP-dependent lipid A-core flippase (589 aa).

6 helical membrane-spanning segments follow: residues 33–53 (VLAI…AWII), 70–90 (LWVP…TFAS), 148–168 (VVVL…MTYL), 170–190 (GWLV…VTAA), 262–282 (LGAV…VILE), and 283–303 (TISP…LPPL). Positions 33-315 (VLAIVCMVLA…VIGVNAEIQK (283 aa)) constitute an ABC transmembrane type-1 domain. An ABC transporter domain is found at 347-583 (IEFDRVAFRY…NGHYASLHRV (237 aa)). An ATP-binding site is contributed by 381-388 (GRSGSGKT).

It belongs to the ABC transporter superfamily. Lipid exporter (TC 3.A.1.106) family. As to quaternary structure, homodimer.

The protein localises to the cell inner membrane. It carries out the reaction ATP + H2O + lipid A-core oligosaccharideSide 1 = ADP + phosphate + lipid A-core oligosaccharideSide 2.. Its function is as follows. Involved in lipopolysaccharide (LPS) biosynthesis. Translocates lipid A-core from the inner to the outer leaflet of the inner membrane. Transmembrane domains (TMD) form a pore in the inner membrane and the ATP-binding domain (NBD) is responsible for energy generation. This chain is ATP-dependent lipid A-core flippase, found in Alkalilimnicola ehrlichii (strain ATCC BAA-1101 / DSM 17681 / MLHE-1).